We begin with the raw amino-acid sequence, 357 residues long: MNLPRGPVMVDIAGFALTEAERARLSHPLVGGVILFRRNFHNIEQLRALTAEIRALRTPHLLIAVDHEGGRVQRFLDGFTRLPPMRVLGEAWDADRDQALKLAETVGYVLAAELSACGIDLSFTPVLDLDWERCAVIGNRAFHRDPEAVSALAEALQQGLGRGGMMSCGKHYPGHGYVEGDSHHLMPQDDRTLAQIEQDDLVPFARLADAGMGAVMPAHVLYPAVDSQPAGFSKVWLTDILRGRIGFDGVIFSDALDMAGAAGAGTYVQRADAALAAGCDMVLVCNQPEEADAMLAALAPPPQPQLAERLERMAGKSRAEDWQRLIATPDFAAAQAAVRQLAMPKDALAGPQVGEAH.

Substrate is bound by residues Asp66, Arg74, Arg140, and Lys170–His171. His183 acts as the Proton donor/acceptor in catalysis. Asp254 acts as the Nucleophile in catalysis.

Belongs to the glycosyl hydrolase 3 family. NagZ subfamily.

The protein resides in the cytoplasm. The catalysed reaction is Hydrolysis of terminal non-reducing N-acetyl-D-hexosamine residues in N-acetyl-beta-D-hexosaminides.. Its pathway is cell wall biogenesis; peptidoglycan recycling. Functionally, plays a role in peptidoglycan recycling by cleaving the terminal beta-1,4-linked N-acetylglucosamine (GlcNAc) from peptide-linked peptidoglycan fragments, giving rise to free GlcNAc, anhydro-N-acetylmuramic acid and anhydro-N-acetylmuramic acid-linked peptides. The protein is Beta-hexosaminidase of Chromobacterium violaceum (strain ATCC 12472 / DSM 30191 / JCM 1249 / CCUG 213 / NBRC 12614 / NCIMB 9131 / NCTC 9757 / MK).